Here is a 138-residue protein sequence, read N- to C-terminus: Small ribosomal subunit protein uS11 (138 aa).

A compositionally biased stretch (polar residues) spans 1–12 (MAKQSAKGSTTT). The interval 1-37 (MAKQSAKGSTTTKRQRGKRREKKNVPRGQAHIQSTFN) is disordered. Basic residues predominate over residues 13–22 (KRQRGKRREK).

Belongs to the universal ribosomal protein uS11 family. As to quaternary structure, part of the 30S ribosomal subunit. Interacts with proteins S7 and S18. Binds to IF-3.

In terms of biological role, located on the platform of the 30S subunit, it bridges several disparate RNA helices of the 16S rRNA. Forms part of the Shine-Dalgarno cleft in the 70S ribosome. This Roseiflexus castenholzii (strain DSM 13941 / HLO8) protein is Small ribosomal subunit protein uS11.